We begin with the raw amino-acid sequence, 919 residues long: Kinesin-like protein KIN-UA (919 aa).

The segment at 1 to 68 is disordered; that stretch reads MSTTSGTGGV…SGGGGDAGVP (68 aa). The span at 15–51 shows a compositional bias: low complexity; sequence GTQRSSLRTQSSASTSSGGQKASVKSKSVLRKSSPAA. Residues 52–66 show a composition bias toward gly residues; the sequence is LGGGSSKSGGGGDAG. The Kinesin motor domain occupies 70-412; sequence RVRVAVRLRP…IMFGQRAMKV (343 aa). 155 to 162 serves as a coordination point for ATP; that stretch reads GQTGTGKT. Positions 286–305 are disordered; the sequence is TRDGLSSESNGNSHMTKSLK. A compositionally biased stretch (polar residues) spans 291 to 301; the sequence is SSESNGNSHMT. The D-BOX signature appears at 382–390; sequence RTSLVITIG. Coiled coils occupy residues 428–492 and 530–621; these read SRRL…SIKK and ALEE…LEQH. ARM repeat units follow at residues 650 to 689, 691 to 731, 733 to 773, and 775 to 814; these read KPPV…NLAA, EANQ…NLAM, ETNQ…NLCG, and DKLQ…NFAK.

This sequence belongs to the TRAFAC class myosin-kinesin ATPase superfamily. Kinesin family. Ungrouped subfamily. In terms of assembly, interacts (via C-terminus) with NEK5. As to expression, expressed in leaves, guard cells, trichomes, vascular tissues, stele of the root tip region and columella cells. Highest expression detected in guard cells.

It localises to the cytoplasm. The protein resides in the cytoskeleton. The protein is Kinesin-like protein KIN-UA of Arabidopsis thaliana (Mouse-ear cress).